The chain runs to 355 residues: MDVQSEEFRGAQAQIWSQSCSFITSASLKCAVKLGIPDTIDNHGKPITLSELTNALVPPVHPSKAPFIYRLMRVLAKNGFCSEEQLDGETEPLYSLTPSSRILLKKEPLNLRGIVLTMADPVQLKAWESLSDWYQNEDDSSTAFETAHGKNFWGYSSEHMEHAEFFNEAMASDSQLISKLLIGEYKFLFEGLASLVDIGGGTGTIAKAIAKNFPQLKCTVFDLPHVVANLESKENVEFVAGDMFEKIPSANAIFLKWILHDWNDEDCVKILKSCKKAIPAKGGKVIIIDMVMYSDKKDDHLVKTQTSMDMAMLVNFAAKERCEKEWAFLFKEAGFSDYKIYPKLDFTRSLIEVYP.

S-adenosyl-L-methionine contacts are provided by residues 198–201 (IGGG), Asp-222, 222–223 (DL), 242–243 (DM), and Lys-256. The Proton acceptor role is filled by His-260.

It belongs to the class I-like SAM-binding methyltransferase superfamily. Cation-independent O-methyltransferase family. COMT subfamily. Homodimer. As to expression, expressed in leaves and flowers. Detected in stems and roots. In leaves, expressed in epidermal cells.

The protein resides in the cytoplasm. It catalyses the reaction 16-hydroxytabersonine + S-adenosyl-L-methionine = 16-methoxytabersonine + S-adenosyl-L-homocysteine + H(+). Its pathway is alkaloid biosynthesis; vindoline biosynthesis. Its function is as follows. 16-O-methyltransferase involved in the biosynthesis of vindoline. Highly specific for 16-hydroxytabersonine. No activity with tabersonine, 3-hydroxytyramine, 4-hydroxytyramine, 5-hydroxytryptamine (5HT), 2,3-dihydro-3-hydroxytabersonine, lochnericine, hoerhammericine, 16-hydroxy-2,3-dihydro-3-hydroxytabersonine, 16-hydroxylochnericine, 16-hydroxyhoerhammericine, quercetin, kaempferol and caffeic acid as substrates. This is Tabersonine 16-O-methyltransferase from Catharanthus roseus (Madagascar periwinkle).